Consider the following 268-residue polypeptide: Interleukin-1 beta (268 aa).

A propeptide spanning residues 1–116 is cleaved from the precursor; it reads MAEVPELASE…TRNNDACVHD (116 aa).

The protein belongs to the IL-1 family. In terms of assembly, monomer. In its precursor form, weakly interacts with full-length MEFV; the mature cytokine does not interact at all. Interacts with integrins ITGAV:ITGBV and ITGA5:ITGB1; integrin-binding is required for IL1B signaling. Interacts with cargo receptor TMED10; the interaction is direct and is required for the secretion of IL1B mature form. Interacts with HSP90AB1; the interaction facilitates cargo translocation into the ERGIC. Interacts with HSP90B1; the interaction facilitates cargo translocation into the ERGIC.

The protein localises to the cytoplasm. The protein resides in the cytosol. It localises to the secreted. It is found in the lysosome. Its subcellular location is the extracellular exosome. Functionally, potent pro-inflammatory cytokine. Initially discovered as the major endogenous pyrogen, induces prostaglandin synthesis, neutrophil influx and activation, T-cell activation and cytokine production, B-cell activation and antibody production, and fibroblast proliferation and collagen production. Promotes Th17 differentiation of T-cells. Synergizes with IL12/interleukin-12 to induce IFNG synthesis from T-helper 1 (Th1) cells. Plays a role in angiogenesis by inducing VEGF production synergistically with TNF and IL6. Involved in transduction of inflammation downstream of pyroptosis: its mature form is specifically released in the extracellular milieu by passing through the gasdermin-D (GSDMD) pore. In Macaca fascicularis (Crab-eating macaque), this protein is Interleukin-1 beta (IL1B).